Reading from the N-terminus, the 309-residue chain is Mitochondrial brown fat uncoupling protein 1 (309 aa).

At 2-10 the chain is on the mitochondrial intermembrane side; that stretch reads VGHTESDVP. The chain crosses the membrane as a helical span at residues 11–32; that stretch reads PTMAVKIFSAGVAACVADIITF. 3 Solcar repeats span residues 11-106, 113-203, and 212-297; these read PTMA…VQEF, ASLG…MKEA, and DDVP…LKQE. Residues 33 to 77 lie on the Mitochondrial matrix side of the membrane; the sequence is PLDTAKVRLQVGSAIQGECLISSAIRYKGVLGTIITLAKTEGPVK. Lysine 60 is a binding site for fatty acid 16:0. The helical transmembrane segment at 78 to 100 threads the bilayer; sequence LYSGLPAGLQRQISFASLRIGLY. At 101–118 the chain is on the mitochondrial intermembrane side; that stretch reads DTVQEFFTTGKEASLGSK. Residues 119–135 form a helical membrane-spanning segment; the sequence is ISAGLMTGGVAVFIGQP. Residues 136–180 lie on the Mitochondrial matrix side of the membrane; the sequence is TEVVKVRLQAQSHLHGPKPRYTGTYNAYRIIATTEGLTGLWKGTT. The chain crosses the membrane as a helical span at residues 181 to 197; it reads PNLTRNVIINCTELVTY. At 198 to 214 the chain is on the mitochondrial intermembrane side; the sequence is DLMKEALVKNKLLADDV. A helical membrane pass occupies residues 215-234; the sequence is PCHFVSAVVAGFCTTVLSSP. The Mitochondrial matrix segment spans residues 235-268; the sequence is VDVVKTRFVNSSPGQYTSVPNCAMMMLTREGPSA. Cysteine 256 is modified (cysteine sulfenic acid (-SOH)). The chain crosses the membrane as a helical span at residues 269–291; sequence FFKGFVPSFLRLGSWNIIMFVCF. Residue lysine 271 coordinates fatty acid 16:0. Over 292 to 309 the chain is Mitochondrial intermembrane; sequence EQLKQELMKSRHTMDCAT.

This sequence belongs to the mitochondrial carrier (TC 2.A.29) family. In terms of assembly, most probably functions as a monomer. Binds one purine nucleotide per monomer. However, has also been suggested to function as a homodimer or a homotetramer. Tightly associates with cardiolipin in the mitochondrion inner membrane; may stabilize and regulate its activity. In terms of processing, may undergo sulfenylation upon cold exposure. May increase the sensitivity of UCP1 thermogenic function to the activation by noradrenaline probably through structural effects. Post-translationally, may undergo ubiquitin-mediated proteasomal degradation.

Its subcellular location is the mitochondrion inner membrane. The catalysed reaction is H(+)(in) = H(+)(out). With respect to regulation, has no constitutive proton transporter activity and has to be activated by long-chain fatty acids/LCFAs. Inhibited by purine nucleotides. Both purine nucleotides and LCFAs bind the cytosolic side of the transporter and directly compete to activate or inhibit it. Activated by noradrenaline and reactive oxygen species. Despite lacking canonical translational encoding for selenocysteine, a small pool of the protein has been observed to selectively incorporate selenocysteine at 'Cys-256'. Selenocysteine-modified protein is highly sensitive to redox modification and may constitute a pool of protein highly sensitive to activation by elevated levels of reactive oxygen species (ROS). In terms of biological role, mitochondrial protein responsible for thermogenic respiration, a specialized capacity of brown adipose tissue and beige fat that participates in non-shivering adaptive thermogenesis to temperature and diet variations and more generally to the regulation of energy balance. Functions as a long-chain fatty acid/LCFA and proton symporter, simultaneously transporting one LCFA and one proton through the inner mitochondrial membrane. However, LCFAs remaining associated with the transporter via their hydrophobic tails, it results in an apparent transport of protons activated by LCFAs. Thereby, dissipates the mitochondrial proton gradient and converts the energy of substrate oxydation into heat instead of ATP. Regulates the production of reactive oxygen species/ROS by mitochondria. This chain is Mitochondrial brown fat uncoupling protein 1, found in Bos taurus (Bovine).